The sequence spans 106 residues: Iron-sulfur cluster assembly protein CyaY (106 aa).

This sequence belongs to the frataxin family.

Functionally, involved in iron-sulfur (Fe-S) cluster assembly. May act as a regulator of Fe-S biogenesis. This is Iron-sulfur cluster assembly protein CyaY from Colwellia psychrerythraea (strain 34H / ATCC BAA-681) (Vibrio psychroerythus).